The chain runs to 173 residues: Peptidoglycan-associated lipoprotein (173 aa).

Positions 1–21 (MQLNKVLKGLMIALPVMAIAA) are cleaved as a signal peptide. Cysteine 22 carries the N-palmitoyl cysteine lipid modification. Residue cysteine 22 is the site of S-diacylglycerol cysteine attachment. The segment at 30–58 (NDGSEGMLGAGTGMDANGGNGNMSSEEQA) is disordered. The segment covering 35–50 (GMLGAGTGMDANGGNG) has biased composition (gly residues). The OmpA-like domain maps to 60-173 (LQMQQLQQNN…SKNRRAVLVY (114 aa)).

It belongs to the Pal lipoprotein family. In terms of assembly, the Tol-Pal system is composed of five core proteins: the inner membrane proteins TolA, TolQ and TolR, the periplasmic protein TolB and the outer membrane protein Pal. They form a network linking the inner and outer membranes and the peptidoglycan layer.

Its subcellular location is the cell outer membrane. Its function is as follows. Part of the Tol-Pal system, which plays a role in outer membrane invagination during cell division and is important for maintaining outer membrane integrity. The sequence is that of Peptidoglycan-associated lipoprotein from Escherichia coli O157:H7.